We begin with the raw amino-acid sequence, 388 residues long: Translation initiation factor eIF2B subunit beta (388 aa).

The disordered stretch occupies residues 109–133 (DDFETTTSNNNNNNNNNNINSSSNI). Low complexity predominate over residues 116–133 (SNNNNNNNNNNINSSSNI).

Belongs to the eIF-2B alpha/beta/delta subunits family. As to quaternary structure, component of the translation initiation factor 2B (eIF2B) complex which is a heterodecamer of two sets of five different subunits: alpha, beta, gamma, delta and epsilon. Subunits alpha, beta and delta comprise a regulatory subcomplex and subunits epsilon and gamma comprise a catalytic subcomplex. Within the complex, the hexameric regulatory complex resides at the center, with the two heterodimeric catalytic subcomplexes bound on opposite sides.

It is found in the cytoplasm. Its subcellular location is the cytosol. In terms of biological role, acts as a component of the translation initiation factor 2B (eIF2B) complex, which catalyzes the exchange of GDP for GTP on eukaryotic initiation factor 2 (eIF2) gamma subunit. Its guanine nucleotide exchange factor activity is repressed when bound to eIF2 complex phosphorylated on the alpha subunit, thereby limiting the amount of methionyl-initiator methionine tRNA available to the ribosome and consequently global translation is repressed. This is Translation initiation factor eIF2B subunit beta (eif2b2) from Dictyostelium discoideum (Social amoeba).